Consider the following 216-residue polypeptide: Phosphatidylserine decarboxylase proenzyme (216 aa).

The active-site Schiff-base intermediate with substrate; via pyruvic acid is the Ser-182. Ser-182 is modified (pyruvic acid (Ser); by autocatalysis).

The protein belongs to the phosphatidylserine decarboxylase family. PSD-A subfamily. As to quaternary structure, heterodimer of a large membrane-associated beta subunit and a small pyruvoyl-containing alpha subunit. Requires pyruvate as cofactor. In terms of processing, is synthesized initially as an inactive proenzyme. Formation of the active enzyme involves a self-maturation process in which the active site pyruvoyl group is generated from an internal serine residue via an autocatalytic post-translational modification. Two non-identical subunits are generated from the proenzyme in this reaction, and the pyruvate is formed at the N-terminus of the alpha chain, which is derived from the carboxyl end of the proenzyme. The post-translation cleavage follows an unusual pathway, termed non-hydrolytic serinolysis, in which the side chain hydroxyl group of the serine supplies its oxygen atom to form the C-terminus of the beta chain, while the remainder of the serine residue undergoes an oxidative deamination to produce ammonia and the pyruvoyl prosthetic group on the alpha chain.

It localises to the cell membrane. The enzyme catalyses a 1,2-diacyl-sn-glycero-3-phospho-L-serine + H(+) = a 1,2-diacyl-sn-glycero-3-phosphoethanolamine + CO2. It participates in phospholipid metabolism; phosphatidylethanolamine biosynthesis; phosphatidylethanolamine from CDP-diacylglycerol: step 2/2. Functionally, catalyzes the formation of phosphatidylethanolamine (PtdEtn) from phosphatidylserine (PtdSer). This Burkholderia mallei (strain NCTC 10247) protein is Phosphatidylserine decarboxylase proenzyme.